A 689-amino-acid chain; its full sequence is MARQYPLKKTRNIGIMAHIDAGKTTTTERILYYTGRVHKMGEVHDGAAVMDWMEQEQERGITITSAATTCEWQKHRINIIDTPGHVDFTVEVERSLRVLDGAIALFCAVGGVEPQSETVWRQADKYQVPRIAFVNKMDRMGADFFHVIEMMEDRLGANAVPLQIPIGSEDDFEGIVDLVTMDAVVYKDDLGVKYERVDIPEDYREQAEEYRENLLEAISELDDEIMMKYLEGEEITTDELKTALRKGVLDVEIVPVLCGSAFKNKGVQLLLDAVIDYLPSPVDVPPVEGMNPDTEEEEIRKAGDDEPFSALAFKIMADPYVGKLTFFRVYSGVLEAGSYVYNSTKGHKERIGRILQMHANHREERESVHAGDLAAAVGLKNTATGDTLCDEDHPIVLESMEFPEPVISVAIEPKSQAEQDKLSLALQRLAEEDPTFKVRTDEETGQTIIRGMGELHLEVIVDRLLREFKVDANIGRPQVAYRETITRKVTDVEGKFIRQSGGRGQYGHVIIDIEPLEEGEGFEFVNKIVGGAIPKEYIPAVEDGIVEAMENGVLAGYPAVDLKITLKDGSYHEVDSSEMAFKIAGSIAFKEGAQKASPVILEPIMDVEVVVPEEYMGDVIGDLNGRRGNVQGMERRASAQVVKAYVPLAEMFGYATDLRSKTQGRATYTMQFSHYEPVPDNIAKEIIGK.

The tr-type G domain maps to 8 to 282 (KKTRNIGIMA…AVIDYLPSPV (275 aa)). Residues 17–24 (AHIDAGKT), 81–85 (DTPGH), and 135–138 (NKMD) each bind GTP.

It belongs to the TRAFAC class translation factor GTPase superfamily. Classic translation factor GTPase family. EF-G/EF-2 subfamily.

The protein localises to the cytoplasm. In terms of biological role, catalyzes the GTP-dependent ribosomal translocation step during translation elongation. During this step, the ribosome changes from the pre-translocational (PRE) to the post-translocational (POST) state as the newly formed A-site-bound peptidyl-tRNA and P-site-bound deacylated tRNA move to the P and E sites, respectively. Catalyzes the coordinated movement of the two tRNA molecules, the mRNA and conformational changes in the ribosome. The chain is Elongation factor G from Halothermothrix orenii (strain H 168 / OCM 544 / DSM 9562).